Consider the following 296-residue polypeptide: Phosphatidylserine decarboxylase proenzyme (296 aa).

Catalysis depends on charge relay system; for autoendoproteolytic cleavage activity residues Asp-113, His-169, and Ser-256. Ser-256 serves as the catalytic Schiff-base intermediate with substrate; via pyruvic acid; for decarboxylase activity. Ser-256 carries the pyruvic acid (Ser); by autocatalysis modification.

It belongs to the phosphatidylserine decarboxylase family. PSD-B subfamily. Prokaryotic type II sub-subfamily. Heterodimer of a large membrane-associated beta subunit and a small pyruvoyl-containing alpha subunit. Pyruvate serves as cofactor. Is synthesized initially as an inactive proenzyme. Formation of the active enzyme involves a self-maturation process in which the active site pyruvoyl group is generated from an internal serine residue via an autocatalytic post-translational modification. Two non-identical subunits are generated from the proenzyme in this reaction, and the pyruvate is formed at the N-terminus of the alpha chain, which is derived from the carboxyl end of the proenzyme. The autoendoproteolytic cleavage occurs by a canonical serine protease mechanism, in which the side chain hydroxyl group of the serine supplies its oxygen atom to form the C-terminus of the beta chain, while the remainder of the serine residue undergoes an oxidative deamination to produce ammonia and the pyruvoyl prosthetic group on the alpha chain. During this reaction, the Ser that is part of the protease active site of the proenzyme becomes the pyruvoyl prosthetic group, which constitutes an essential element of the active site of the mature decarboxylase.

It localises to the cell membrane. The enzyme catalyses a 1,2-diacyl-sn-glycero-3-phospho-L-serine + H(+) = a 1,2-diacyl-sn-glycero-3-phosphoethanolamine + CO2. It functions in the pathway phospholipid metabolism; phosphatidylethanolamine biosynthesis; phosphatidylethanolamine from CDP-diacylglycerol: step 2/2. In terms of biological role, catalyzes the formation of phosphatidylethanolamine (PtdEtn) from phosphatidylserine (PtdSer). This Clostridium botulinum (strain Eklund 17B / Type B) protein is Phosphatidylserine decarboxylase proenzyme.